Here is a 213-residue protein sequence, read N- to C-terminus: Receptor-binding cancer antigen expressed on SiSo cells (213 aa).

Over 1–7 (MAITQFR) the chain is Extracellular. Residues 8–27 (LFKVCTCLATVFSFLKRLIC) form a helical; Signal-anchor for type III membrane protein membrane-spanning segment. At 28–213 (RSGRGRKLSG…EQNKIGVKLS (186 aa)) the chain is on the cytoplasmic side. Position 36 is a phosphoserine (Ser-36). A Phosphothreonine modification is found at Thr-41. At Tyr-94 the chain carries Phosphotyrosine. A coiled-coil region spans residues 163–211 (EDAAWQAEEVLRQQKIADREKRAAEQQRKKMEKEAQRLMKKEQNKIGVK). The span at 179–206 (ADREKRAAEQQRKKMEKEAQRLMKKEQN) shows a compositional bias: basic and acidic residues. The disordered stretch occupies residues 179–213 (ADREKRAAEQQRKKMEKEAQRLMKKEQNKIGVKLS).

Homodimer. Widely expressed. Expressed in heart, brain, spleen, liver, kidney and testis.

It is found in the golgi apparatus membrane. Its function is as follows. May participate in suppression of cell proliferation and induces apoptotic cell death through activation of interleukin-1-beta converting enzyme (ICE)-like proteases. This Mus musculus (Mouse) protein is Receptor-binding cancer antigen expressed on SiSo cells (Ebag9).